Here is a 442-residue protein sequence, read N- to C-terminus: Protein bangles and beads (442 aa).

Residues Ala-47–Asn-442 form a disordered region. Composition is skewed to basic and acidic residues over residues Pro-55–Glu-67, Pro-114–Pro-125, and Glu-133–Ala-146. The span at Ala-159 to Glu-172 shows a compositional bias: low complexity. Composition is skewed to basic and acidic residues over residues Val-177 to Glu-194 and Ala-204 to Lys-240. 2 stretches are compositionally biased toward low complexity: residues Ala-241 to Lys-255 and Ser-272 to Ala-288. Residues Glu-329–Pro-339 are compositionally biased toward basic and acidic residues. Residues Thr-357–Pro-376 show a composition bias toward low complexity. Positions Glu-408 to Asn-442 are enriched in basic and acidic residues. A phosphoserine mark is found at Ser-430, Ser-433, Ser-436, and Ser-437.

As to expression, expressed in the embryonic CNS, in sets of cells that are segmentally reiterated along the periphery of the nervous system.

Its function is as follows. May play an important role during development. This Drosophila melanogaster (Fruit fly) protein is Protein bangles and beads (bnb).